The sequence spans 89 residues: MTSLIAFLFTVLVIVSSVHCRMTTASTPGYGIKQEDRLCIQGQEGTKLCSSGTSRDCLNFCLIRGYAGGSCYAYTLDQCCCRIPPPKLK.

The signal sequence occupies residues 1-20; it reads MTSLIAFLFTVLVIVSSVHC. 4 cysteine pairs are disulfide-bonded: Cys39–Cys81, Cys49–Cys71, Cys57–Cys79, and Cys61–Cys80.

It belongs to the DEFL family.

It localises to the secreted. The protein is Defensin-like protein 108 (LCR51) of Arabidopsis thaliana (Mouse-ear cress).